A 913-amino-acid chain; its full sequence is Protein ECT2 (913 aa).

Ala-2 carries the post-translational modification N-acetylalanine. 2 consecutive BRCT domains span residues 176–260 (MLNL…AAVD) and 266–354 (FKVP…MYLY). Thr-359 is subject to Phosphothreonine; by PKC/PRKCI. 2 positions are modified to phosphoserine: Ser-367 and Ser-370. The residue at position 373 (Thr-373) is a Phosphothreonine. Phosphoserine is present on Ser-376. 2 consecutive short sequence motifs (nuclear localization signal) follow at residues 378 to 382 (RKRRR) and 401 to 405 (PRKRP). Disordered regions lie at residues 389-415 (QLSR…SIGS) and 427-450 (IHYG…PPKQ). Thr-444 bears the Phosphothreonine; by CDK1 mark. The region spanning 452–641 (ARWQVAKELY…KEVMTHINED (190 aa)) is the DH domain. A Glycyl lysine isopeptide (Lys-Gly) (interchain with G-Cter in SUMO2) cross-link involves residue Lys-611. The PH domain occupies 675–794 (RVETVSLGEH…KMLCRHVANT (120 aa)). Ser-716 and Ser-842 each carry phosphoserine. Residue Thr-846 is modified to Phosphothreonine; by CDK1. The interval 853 to 874 (MALSSSHSSEGRSPPSSGKLAV) is disordered. Residues 856–870 (SSSHSSEGRSPPSSG) show a composition bias toward low complexity. 2 positions are modified to phosphoserine: Ser-861 and Ser-865.

Homodimer. Homooligomer. Found in the centralspindlin complex. Interacts with NR1I3. Interacts (Thr-359 phosphorylated form) with PARD6A; the interaction is observed in cancer cells. Interacts (Thr-359 phosphorylated form) with PRKCI; the interaction is observed in cancer cells. Interacts with PKP4; the interaction is observed at the midbody. Interacts with RACGAP1; the interaction is direct, occurs in a microtubule-dependent manner, occurs at anaphase and during cytokinesis, is inhibited in metaphase by phosphorylation of ECT2 on Thr-373 and is stimulated in early anaphase by dephosphorylation of ECT2 probably on Thr-373 through CDK1 activity. Interacts with PLK1; the interaction is stimulated upon its phosphorylation on Thr-444. Interacts with RHOA; the interaction results in allosteric activation of ECT2. Interacts with KIF23, PARD3, PARD6B and PRKCQ. Interacts with NEDD9/HEF1. Post-translationally, phosphorylated by PLK1 in vitro. Hyperphosphorylated during the G2 phase of the cell cycle. Phosphorylation at Thr-373 occurs during the G2/M phase, relieves its auto-inhibition status and stimulates its GEF activity. Phosphorylation at Thr-444 in G2/M phase is required for subsequent binding with PLK1 and Rho exchange activation. Dephosphorylated at the time of cytokinesis. Phosphorylation at Thr-359 is required for its transformation activity in cancer cells. In terms of tissue distribution, highest expression in testis. Also detectable in brain, kidney, liver and spleen.

The protein resides in the nucleus. It is found in the cytoplasm. Its subcellular location is the cytoskeleton. It localises to the spindle. The protein localises to the cleavage furrow. The protein resides in the midbody. It is found in the cell junction. Its subcellular location is the tight junction. Autoinhibited by the C-terminal PH domain which folds back and binds to the surface of the DH domain, blocking binding of RHOA to the catalytic center of the DH domain. The 2nd BRCT domain is also involved in inhibition, probably by helping to impede RHOA binding. Allosterically activated by binding of activated GTP-bound RHOA to the PH domain which stimulates the release of PH inhibition and promotes the binding of substrate RHOA to the catalytic center. Binding of phosphorylated RACGAP1 to the N-terminal BRCT domain-containing region also releases autoinhibition. Guanine nucleotide exchange factor (GEF) that catalyzes the exchange of GDP for GTP. Promotes guanine nucleotide exchange on the Rho family members of small GTPases, like RHOA, RHOC, RAC1 and CDC42. Required for signal transduction pathways involved in the regulation of cytokinesis. Component of the centralspindlin complex that serves as a microtubule-dependent and Rho-mediated signaling required for the myosin contractile ring formation during the cell cycle cytokinesis. Regulates the translocation of RHOA from the central spindle to the equatorial region. Plays a role in the control of mitotic spindle assembly; regulates the activation of CDC42 in metaphase for the process of spindle fibers attachment to kinetochores before chromosome congression. Involved in the regulation of epithelial cell polarity; participates in the formation of epithelial tight junctions in a polarity complex PARD3-PARD6-protein kinase PRKCQ-dependent manner. Plays a role in the regulation of neurite outgrowth. Inhibits phenobarbital (PB)-induced NR1I3 nuclear translocation. Stimulates the activity of RAC1 through its association with the oncogenic PARD6A-PRKCI complex in cancer cells, thereby acting to coordinately drive tumor cell proliferation and invasion. Also stimulates genotoxic stress-induced RHOB activity in breast cancer cells leading to their cell death. In Mus musculus (Mouse), this protein is Protein ECT2 (Ect2).